The primary structure comprises 306 residues: Methionyl-tRNA formyltransferase (306 aa).

A (6S)-5,6,7,8-tetrahydrofolate-binding site is contributed by 109–112 (SILP).

It belongs to the Fmt family.

It catalyses the reaction L-methionyl-tRNA(fMet) + (6R)-10-formyltetrahydrofolate = N-formyl-L-methionyl-tRNA(fMet) + (6S)-5,6,7,8-tetrahydrofolate + H(+). Attaches a formyl group to the free amino group of methionyl-tRNA(fMet). The formyl group appears to play a dual role in the initiator identity of N-formylmethionyl-tRNA by promoting its recognition by IF2 and preventing the misappropriation of this tRNA by the elongation apparatus. This Herpetosiphon aurantiacus (strain ATCC 23779 / DSM 785 / 114-95) protein is Methionyl-tRNA formyltransferase.